Here is a 142-residue protein sequence, read N- to C-terminus: Augurin-A (142 aa).

Residues 1-28 (MLSEKFHLRLLTLLTLLTALSLTDVASE) form the signal peptide. Propeptides lie at residues 29–66 (SKLEKLLMKRVDRDVKPAAAVAVSPSKAKEFLTSLKRP) and 127–142 (GAASYRHGANVNYDYY).

Belongs to the augurin family.

Its subcellular location is the secreted. The protein resides in the cytoplasm. The protein localises to the apical cell membrane. Its function is as follows. Probable hormone. Required for the proper formation of the central nervous system by attenuating cell proliferation during development. In Danio rerio (Zebrafish), this protein is Augurin-A.